A 216-amino-acid chain; its full sequence is Somatotropin (216 aa).

An N-terminal signal peptide occupies residues 1–26 (MAAGPRNSMLLVFALLSLPWPQEVGA). His45 contributes to the Zn(2+) binding site. Cys78 and Cys189 are disulfide-bonded. At Ser131 the chain carries Phosphoserine. Zn(2+) is bound at residue Glu198. A disulfide bond links Cys206 and Cys214.

It belongs to the somatotropin/prolactin family.

Its subcellular location is the secreted. Plays an important role in growth control. Its major role in stimulating body growth is to stimulate the liver and other tissues to secrete IGF1. It stimulates both the differentiation and proliferation of myoblasts. It also stimulates amino acid uptake and protein synthesis in muscle and other tissues. This Neovison vison (American mink) protein is Somatotropin (GH1).